The chain runs to 261 residues: Indole-3-glycerol phosphate synthase (261 aa).

It belongs to the TrpC family.

It carries out the reaction 1-(2-carboxyphenylamino)-1-deoxy-D-ribulose 5-phosphate + H(+) = (1S,2R)-1-C-(indol-3-yl)glycerol 3-phosphate + CO2 + H2O. Its pathway is amino-acid biosynthesis; L-tryptophan biosynthesis; L-tryptophan from chorismate: step 4/5. The protein is Indole-3-glycerol phosphate synthase of Campylobacter hominis (strain ATCC BAA-381 / DSM 21671 / CCUG 45161 / LMG 19568 / NCTC 13146 / CH001A).